Reading from the N-terminus, the 84-residue chain is UPF0297 protein Csac_1773 (84 aa).

The protein belongs to the UPF0297 family.

The polypeptide is UPF0297 protein Csac_1773 (Caldicellulosiruptor saccharolyticus (strain ATCC 43494 / DSM 8903 / Tp8T 6331)).